The chain runs to 440 residues: uncharacterized protein (440 aa).

10 helical membrane passes run 26–46, 59–79, 96–116, 138–158, 211–231, 241–261, 263–283, 284–304, 394–414, and 418–438; these read NGLIWCWWLFVISLVLASSTF, FVFWILALIFGVAVAFINGVL, FFLGFFFPQMAFCNALWLKLK, LTLSVFVVWGIYCVLATSIYL, FLVFFIIPTITLITLGCYLFA, LRKPLSTLSIVIMLTDVVGII, WIIIDILLIWLNVPFVIFVIF, WVIKLVLPLAMIGTFVSSLTI, FLIIFFSIISLILATIGSVFI, and IVQISIPFYVIGGVIWFFTFI.

To M.pneumoniae MPN_087.

It is found in the cell membrane. This is an uncharacterized protein from Mycoplasma pneumoniae (strain ATCC 29342 / M129 / Subtype 1) (Mycoplasmoides pneumoniae).